The chain runs to 113 residues: Gamma-glutamylcyclotransferase family protein YtfP (113 aa).

It belongs to the gamma-glutamylcyclotransferase family.

The chain is Gamma-glutamylcyclotransferase family protein YtfP (ytfP) from Escherichia coli O157:H7.